The sequence spans 82 residues: DNA-directed RNA polymerase subunit omega (82 aa).

It belongs to the RNA polymerase subunit omega family. The RNAP catalytic core consists of 2 alpha, 1 beta, 1 beta' and 1 omega subunit. When a sigma factor is associated with the core the holoenzyme is formed, which can initiate transcription.

It carries out the reaction RNA(n) + a ribonucleoside 5'-triphosphate = RNA(n+1) + diphosphate. In terms of biological role, promotes RNA polymerase assembly. Latches the N- and C-terminal regions of the beta' subunit thereby facilitating its interaction with the beta and alpha subunits. The polypeptide is DNA-directed RNA polymerase subunit omega (Lacticaseibacillus casei (strain BL23) (Lactobacillus casei)).